Here is a 521-residue protein sequence, read N- to C-terminus: Hyccin (521 aa).

Position 306 is a phosphothreonine (threonine 306). Serine 321 is modified (phosphoserine). Positions 355 to 373 are enriched in low complexity; it reads AASSTSQSGLSNSSHNCSN. Residues 355–413 form a disordered region; that stretch reads AASSTSQSGLSNSSHNCSNKTSVGKNQRRSGGSKAGAKERETAGESCRDHFARKQTQRA. The span at 390 to 406 shows a compositional bias: basic and acidic residues; that stretch reads GAKERETAGESCRDHFA. Phosphoserine is present on residues serine 415, serine 422, serine 433, serine 453, and serine 465.

This sequence belongs to the Hyccin family. In terms of assembly, component of a phosphatidylinositol 4-kinase (PI4K) complex, composed of PI4KA, EFR3 (EFR3A or EFR3B), TTC7 (TTC7A or TTC7B) and HYCC (HYCC1 or HYCC2). Interacts with TTC7 (TTC7A or TTC7B), interaction is direct. Predominantly expressed in the central nervous system, where it is found in neurons but not in myelinating cells. Lower abundance is observed in peripheral neurons, where it is detectable only at early postnatal ages. Expressed in both oligodendrocytes and neurons.

Its subcellular location is the cytoplasm. The protein resides in the cytosol. The protein localises to the cell membrane. Component of a complex required to localize phosphatidylinositol 4-kinase (PI4K) to the plasma membrane. The complex acts as a regulator of phosphatidylinositol 4-phosphate (PtdIns(4)P) synthesis. HYCC1 plays a key role in oligodendrocytes formation, a cell type with expanded plasma membrane that requires generation of PtdIns(4)P. Its role in oligodendrocytes formation probably explains its importance in myelination of the central and peripheral nervous system. May also have a role in the beta-catenin/Lef signaling pathway. In Mus musculus (Mouse), this protein is Hyccin (Hycc1).